A 98-amino-acid chain; its full sequence is YcgL domain-containing protein Ping_1076 (98 aa).

The YcgL domain occupies 1-85 (MLCAVYKSIR…PPVNHLQEHK (85 aa)). The interval 75–98 (PPPVNHLQEHKDWKKKRQENKNEI) is disordered.

This is YcgL domain-containing protein Ping_1076 from Psychromonas ingrahamii (strain DSM 17664 / CCUG 51855 / 37).